Here is a 365-residue protein sequence, read N- to C-terminus: Class I histocompatibility antigen, B alpha chain (365 aa).

Residues 1–24 (MTVMAPRTLLLLLSGALVLTETWA) form the signal peptide. The segment at 25-114 (GSHSMRYFST…ALGYYNQSEA (90 aa)) is alpha-1. The Extracellular portion of the chain corresponds to 25–308 (GSHSMRYFST…EPPSQPTIPI (284 aa)). The N-linked (GlcNAc...) asparagine glycan is linked to N110. Residues 115-206 (GSHTIQMMSG…ENGKETLQRA (92 aa)) are alpha-2. Cystine bridges form between C125-C188 and C227-C283. Residues 207–298 (EPPKTHVTHH…GLPEPLTLRW (92 aa)) are alpha-3. The Ig-like C1-type domain occupies 209–297 (PKTHVTHHPV…EGLPEPLTLR (89 aa)). Residues 299–308 (EPPSQPTIPI) form a connecting peptide region. The chain crosses the membrane as a helical span at residues 309 to 332 (MGIVAILAILGAVVTGAVVTAVMW). The Cytoplasmic portion of the chain corresponds to 333-365 (RKKSSDKKGGSYSQAARSDSAQGSDVSLTACKV). The disordered stretch occupies residues 337-361 (SDKKGGSYSQAARSDSAQGSDVSLT). The segment covering 346–359 (QAARSDSAQGSDVS) has biased composition (polar residues). Phosphoserine occurs at positions 356 and 359.

This sequence belongs to the MHC class I family. As to quaternary structure, heterodimer of an alpha chain and a beta chain (beta-2-microglobulin).

The protein resides in the membrane. Functionally, involved in the presentation of foreign antigens to the immune system. The chain is Class I histocompatibility antigen, B alpha chain from Saguinus oedipus (Cotton-top tamarin).